The sequence spans 250 residues: Small ribosomal subunit protein uS3 (250 aa).

One can recognise a KH type-2 domain in the interval 39 to 111 (IRTLIKNHYP…KVQINIFEVK (73 aa)).

This sequence belongs to the universal ribosomal protein uS3 family. Part of the 30S ribosomal subunit. Forms a tight complex with proteins S10 and S14.

Binds the lower part of the 30S subunit head. Binds mRNA in the 70S ribosome, positioning it for translation. The protein is Small ribosomal subunit protein uS3 of Phytoplasma vitis (Flavescence doree phytoplasma).